The chain runs to 480 residues: Acetylxylan esterase (480 aa).

A signal peptide spans 1 to 19; sequence MNRKLFMTGLLMLAMTMQA.

The protein belongs to the AB hydrolase superfamily.

It carries out the reaction Deacetylation of xylans and xylo-oligosaccharides.. The protein operates within glycan degradation; xylan degradation. Its function is as follows. Involved in degradation of plant cell wall polysaccharides. Is an acetyl esterase with broad substrate specificity, releasing acetic acid from acetylated xylo-oligosaccharides and acetylated xylan as well as xylose-tetraacetate, 4-O-methylumbelliferyl acetate, glucose-pentaacetate, and cephalosporin C. Appears to have greater activity on oligosaccharides than on polymeric substrates. Is also able to release acetic acid from xylo-oligosaccharides with 4-O-methylglucuronic acid side groups proximally located to O-acetyl esters. Preferentially targets xylo-oligosaccharides possessing three or more O-acetyl groups, but following their depletion it is active on the less acetylated portion of the substrate. This is Acetylxylan esterase from Xylanibacter ruminicola (strain ATCC 19189 / DSM 19721 / CIP 105475 / JCM 8958 / 23) (Prevotella ruminicola).